The primary structure comprises 174 residues: Shikimate kinase (174 aa).

14-19 (GAGKST) serves as a coordination point for ATP. Position 18 (S18) interacts with Mg(2+). D36, R60, and G82 together coordinate substrate. ATP is bound at residue R120. R141 contributes to the substrate binding site. R158 provides a ligand contact to ATP.

Belongs to the shikimate kinase family. As to quaternary structure, monomer. Requires Mg(2+) as cofactor.

Its subcellular location is the cytoplasm. The catalysed reaction is shikimate + ATP = 3-phosphoshikimate + ADP + H(+). Its pathway is metabolic intermediate biosynthesis; chorismate biosynthesis; chorismate from D-erythrose 4-phosphate and phosphoenolpyruvate: step 5/7. Catalyzes the specific phosphorylation of the 3-hydroxyl group of shikimic acid using ATP as a cosubstrate. This chain is Shikimate kinase, found in Buchnera aphidicola subsp. Baizongia pistaciae (strain Bp).